Consider the following 515-residue polypeptide: Serine/threonine-protein phosphatase PP-Z (515 aa).

Positions 1-186 are disordered; sequence MGQGSSKHAD…SSTDPDDPET (186 aa). The segment covering 17–30 has biased composition (polar residues); sequence PSFSRSDTQGSIKS. Position 18 is a phosphoserine (Ser18). Basic and acidic residues predominate over residues 40–51; the sequence is KGKDSNHDRRTS. Residues 63–74 are compositionally biased toward pro residues; that stretch reads ETPPSLPPPPSP. The span at 91 to 109 shows a compositional bias: polar residues; it reads DSGNSSQSPTSPHPSNQPA. Low complexity predominate over residues 126–143; it reads SSSSYAVSPTSPTSPTSS. Positions 248, 250, 276, and 308 each coordinate Mn(2+). The active-site Proton donor is His309. Mn(2+) is bound by residues His357 and His432. Residues Ser505 and Ser514 each carry the phosphoserine modification.

It belongs to the PPP phosphatase family. PP-Z subfamily. Mn(2+) is required as a cofactor.

Its subcellular location is the cytoplasm. The enzyme catalyses O-phospho-L-seryl-[protein] + H2O = L-seryl-[protein] + phosphate. It carries out the reaction O-phospho-L-threonyl-[protein] + H2O = L-threonyl-[protein] + phosphate. The polypeptide is Serine/threonine-protein phosphatase PP-Z (pzh1) (Schizosaccharomyces pombe (strain 972 / ATCC 24843) (Fission yeast)).